Here is a 568-residue protein sequence, read N- to C-terminus: Cytosolic purine 5'-nucleotidase (568 aa).

Catalysis depends on aspartate 52, which acts as the Nucleophile. Positions 52 and 54 each coordinate IMP. Residues aspartate 52 and aspartate 54 each contribute to the Mg(2+) site. Aspartate 54 functions as the Proton donor in the catalytic mechanism. Residues arginine 144 and asparagine 154 each coordinate ATP. IMP contacts are provided by arginine 202, aspartate 206, lysine 215, threonine 249, asparagine 250, serine 251, and lysine 292. Residue aspartate 351 coordinates Mg(2+). Residues glutamine 453 and arginine 456 each contribute to the ATP site. Positions 528–568 are disordered; it reads ISEIKPPNLFPQKPQEITHCHDEDDDEEEEEEEEEEEEEEE. The tract at residues 548–568 is required for tetramer assembly; that stretch reads HDEDDDEEEEEEEEEEEEEEE. Residues 550–568 show a composition bias toward acidic residues; it reads EDDDEEEEEEEEEEEEEEE.

It belongs to the 5'(3')-deoxyribonucleotidase family. In terms of assembly, homotetramer. Requires Mg(2+) as cofactor.

It localises to the cytoplasm. It is found in the cytosol. The enzyme catalyses a ribonucleoside 5'-phosphate + H2O = a ribonucleoside + phosphate. It carries out the reaction a 2'-deoxyribonucleoside + a ribonucleoside 5'-phosphate = a ribonucleoside + a 2'-deoxyribonucleoside 5'-phosphate. The catalysed reaction is IMP + H2O = inosine + phosphate. It catalyses the reaction GMP + H2O = guanosine + phosphate. The enzyme catalyses dIMP + H2O = 2'-deoxyinosine + phosphate. It carries out the reaction dGMP + H2O = 2'-deoxyguanosine + phosphate. The catalysed reaction is XMP + H2O = xanthosine + phosphate. It catalyses the reaction inosine + GMP = guanosine + IMP. The enzyme catalyses dGMP + inosine = 2'-deoxyguanosine + IMP. It carries out the reaction dIMP + inosine = 2'-deoxyinosine + IMP. The catalysed reaction is inosine + UMP = uridine + IMP. It catalyses the reaction inosine + CMP = cytidine + IMP. The enzyme catalyses inosine + AMP = IMP + adenosine. With respect to regulation, allosterically activated by various compounds including ATP, 2,3-BPG/2,3-Bisphosphoglyceric acid and Ap4A/P1,P4-bis(5'-adenosyl) tetraphosphate. Binding of an allosteric activator is a prerequisiste to magnesium and substrate binding. Inhibited by inorganic phosphate. In terms of biological role, broad specificity cytosolic 5'-nucleotidase that catalyzes the dephosphorylation of 6-hydroxypurine nucleoside 5'-monophosphates. In addition, possesses a phosphotransferase activity by which it can transfer a phosphate from a donor nucleoside monophosphate to an acceptor nucleoside, preferably inosine, deoxyinosine and guanosine. Has the highest activities for IMP and GMP followed by dIMP, dGMP and XMP. Could also catalyze the transfer of phosphates from pyrimidine monophosphates but with lower efficiency. Through these activities regulates the purine nucleoside/nucleotide pools within the cell. This chain is Cytosolic purine 5'-nucleotidase (nt5c2), found in Xenopus tropicalis (Western clawed frog).